The following is a 223-amino-acid chain: Small ribosomal subunit protein uS3 (223 aa).

The 69-residue stretch at 39–107 (VRSYLAKKLS…PVHINIQEIR (69 aa)) folds into the KH type-2 domain.

It belongs to the universal ribosomal protein uS3 family. As to quaternary structure, part of the 30S ribosomal subunit. Forms a tight complex with proteins S10 and S14.

In terms of biological role, binds the lower part of the 30S subunit head. Binds mRNA in the 70S ribosome, positioning it for translation. The sequence is that of Small ribosomal subunit protein uS3 from Nitrosococcus oceani (strain ATCC 19707 / BCRC 17464 / JCM 30415 / NCIMB 11848 / C-107).